The chain runs to 382 residues: MIKSALLVLEDGTQFHGRAIGATGSAVGEVVFNTSMTGYQEILTDPSYSRQIVTLTYPHIGNVGTNDADEESSQVHAQGLVIRDLPLIASNFRNTEDLSSYLKRHNIVAIADIDTRKLTRLLREKGAQNGCIIAGDNPDAALALEKARAFPGLNGMDLAKEVTTAEPYSWTQGSWTLTGGLPEAKKEDELPYHVVAYDFGAKRNILRMLVDRGCRLTIVPAQTSAEDVLKMNPDGIFLSNGPGDPAPCDYAITAIQKFLETDIPVFGICLGHQLLALASGAKTVKMKFGHHGGNHPVKDVEKNVVMITAQNHGFAVDEATLPANLRVTHKSLFDGTLQGIHRTDKPAFSFQGHPEASPGPHDAAPLFDHFIALIEQYRKTAK.

The tract at residues 1–189 is CPSase; sequence MIKSALLVLE…GLPEAKKEDE (189 aa). The L-glutamine site is built by S47, G241, and G243. The region spanning 193–380 is the Glutamine amidotransferase type-1 domain; the sequence is HVVAYDFGAK…IALIEQYRKT (188 aa). The Nucleophile role is filled by C269. Positions 270, 273, 311, 313, and 314 each coordinate L-glutamine. Active-site residues include H353 and E355.

It belongs to the CarA family. In terms of assembly, composed of two chains; the small (or glutamine) chain promotes the hydrolysis of glutamine to ammonia, which is used by the large (or ammonia) chain to synthesize carbamoyl phosphate. Tetramer of heterodimers (alpha,beta)4.

The enzyme catalyses hydrogencarbonate + L-glutamine + 2 ATP + H2O = carbamoyl phosphate + L-glutamate + 2 ADP + phosphate + 2 H(+). The catalysed reaction is L-glutamine + H2O = L-glutamate + NH4(+). The protein operates within amino-acid biosynthesis; L-arginine biosynthesis; carbamoyl phosphate from bicarbonate: step 1/1. It functions in the pathway pyrimidine metabolism; UMP biosynthesis via de novo pathway; (S)-dihydroorotate from bicarbonate: step 1/3. In terms of biological role, small subunit of the glutamine-dependent carbamoyl phosphate synthetase (CPSase). CPSase catalyzes the formation of carbamoyl phosphate from the ammonia moiety of glutamine, carbonate, and phosphate donated by ATP, constituting the first step of 2 biosynthetic pathways, one leading to arginine and/or urea and the other to pyrimidine nucleotides. The small subunit (glutamine amidotransferase) binds and cleaves glutamine to supply the large subunit with the substrate ammonia. The protein is Carbamoyl phosphate synthase small chain of Escherichia coli O6:H1 (strain CFT073 / ATCC 700928 / UPEC).